The sequence spans 682 residues: MPEDGGPFGSEAAEASGAMSETENEYDDHEPHHKDEDDRMSEQNTTPDGVDAGGEVKKKYDPKDPLRPRRKKARRACYACQRAHLTCGDERPCQRCIKRGLQDSCQDGVRKKAKYLHDAPPEALRPVLGPNYNPNAPSSRHGGQRHHSVSTDASTVRTFFSHSNASQYPVYSSTQSIPHGLTESLPFNSQQSPVSPTFQQTSSNPPISGMVAPPVSSPMTPFGLPFDPSDPNIFNFNIDGLNFGSHYGAMEFGMLGHMSSSAADTPPQESGMGQQPGDVHFGAGLFGSHFDNRMLPEFLGLDAGANGIYSQGNLQHGLPHAYAIPAGPTSLQSPSTENNSPQPTTFGFDDRPSPTMSQYPNAPGAKSSSNSRPSKLRKLDKVAILQKRQRDPSYIYDTVKKSFDYVGSFHKLFEVLSSRFSQPHAARIAKSLAAIRPALLASTRNLTTQDLIFMEQCFQRTLFEYEDFMTQSSSPTLACRRTGEIAGVNKEFTALTGWTKDVLLGKEPNRNTNLGGTGVRTTPRLKSLNESSAENGGAASGPRPVFLAELMDHESAVEFYEDYSQLAFGDSRGRMTRKCRLLKYRTDKPAAGGGGGAGEEERKPDPSAAPRQQEKDSRHSILSNRVAKIDGEHGISKLERDGKLECSYTWTIKRDMFDMPMLFVINVRFFFFFDDYYGRRHC.

The interval 1-72 (MPEDGGPFGS…KDPLRPRRKK (72 aa)) is disordered. Positions 9–21 (GSEAAEASGAMSE) are enriched in low complexity. Basic and acidic residues-rich tracts occupy residues 29–41 (HEPH…DRMS) and 54–67 (GEVK…DPLR). Residues 77-105 (CYACQRAHLTCGDERPCQRCIKRGLQDSC) constitute a DNA-binding region (zn(2)-C6 fungal-type). Disordered regions lie at residues 122-148 (EALR…RHHS), 181-211 (LTES…SGMV), 325-375 (PAGP…RPSK), 509-541 (NRNT…AASG), and 586-622 (TDKP…HSIL). Composition is skewed to polar residues over residues 185-206 (LPFN…SNPP), 329-345 (TSLQ…QPTT), and 354-373 (PTMS…NSRP).

It belongs to the ERT1/acuK family.

Its subcellular location is the nucleus. Functionally, transcription factor which regulates nonfermentable carbon utilization. Activator of gluconeogenetic genes. The protein is Transcription activator of gluconeogenesis PODANS_4_8760 of Podospora anserina (strain S / ATCC MYA-4624 / DSM 980 / FGSC 10383) (Pleurage anserina).